A 200-amino-acid chain; its full sequence is Recombination protein RecR (200 aa).

Residues 60–75 (CVYCQALTEDDVCNIC) form a C4-type zinc finger. The Toprim domain maps to 83 to 177 (TKLCIIESML…KISRIGFGVP (95 aa)).

This sequence belongs to the RecR family.

Functionally, may play a role in DNA repair. It seems to be involved in an RecBC-independent recombinational process of DNA repair. It may act with RecF and RecO. The chain is Recombination protein RecR from Francisella tularensis subsp. holarctica (strain OSU18).